The sequence spans 296 residues: UDP-N-acetylenolpyruvoylglucosamine reductase (296 aa).

The 185-residue stretch at 19–203 (KVGGFAEYFS…LETTQKNLKK (185 aa)) folds into the FAD-binding PCMH-type domain. Arginine 166 is a catalytic residue. Serine 217 functions as the Proton donor in the catalytic mechanism. The active site involves glutamate 287.

The protein belongs to the MurB family. The cofactor is FAD.

Its subcellular location is the cytoplasm. It carries out the reaction UDP-N-acetyl-alpha-D-muramate + NADP(+) = UDP-N-acetyl-3-O-(1-carboxyvinyl)-alpha-D-glucosamine + NADPH + H(+). It participates in cell wall biogenesis; peptidoglycan biosynthesis. Its function is as follows. Cell wall formation. This chain is UDP-N-acetylenolpyruvoylglucosamine reductase, found in Prochlorococcus marinus subsp. pastoris (strain CCMP1986 / NIES-2087 / MED4).